The chain runs to 404 residues: Formate-dependent phosphoribosylglycinamide formyltransferase (404 aa).

N(1)-(5-phospho-beta-D-ribosyl)glycinamide contacts are provided by residues 25-26 (EL) and E85. Residues R118, K159, 164–169 (SSGKGQ), 199–202 (EGFI), and E207 contribute to the ATP site. The 196-residue stretch at 123–318 (RLAAEELGLP…EFELHARAIL (196 aa)) folds into the ATP-grasp domain. 2 residues coordinate Mg(2+): E277 and E289. N(1)-(5-phospho-beta-D-ribosyl)glycinamide contacts are provided by residues D296, K365, and 372 to 373 (RR).

The protein belongs to the PurK/PurT family. In terms of assembly, homodimer.

It carries out the reaction N(1)-(5-phospho-beta-D-ribosyl)glycinamide + formate + ATP = N(2)-formyl-N(1)-(5-phospho-beta-D-ribosyl)glycinamide + ADP + phosphate + H(+). It participates in purine metabolism; IMP biosynthesis via de novo pathway; N(2)-formyl-N(1)-(5-phospho-D-ribosyl)glycinamide from N(1)-(5-phospho-D-ribosyl)glycinamide (formate route): step 1/1. Involved in the de novo purine biosynthesis. Catalyzes the transfer of formate to 5-phospho-ribosyl-glycinamide (GAR), producing 5-phospho-ribosyl-N-formylglycinamide (FGAR). Formate is provided by PurU via hydrolysis of 10-formyl-tetrahydrofolate. The chain is Formate-dependent phosphoribosylglycinamide formyltransferase from Burkholderia mallei (strain NCTC 10247).